Consider the following 270-residue polypeptide: Non-structural maintenance of chromosomes element 1 homolog (270 aa).

Residues 185 to 226 form an RING-type; atypical zinc finger; it reads CNVCRKVAIQSQLCENCGIPLHLQCAGKYFHGKANPTCPNCN. The disordered stretch occupies residues 236-270; the sequence is LNQVSSQGPSHSQTETVRGRNQRSKNTSTASRTSR. Polar residues-rich tracts occupy residues 237-251 and 259-270; these read NQVSSQGPSHSQTET and SKNTSTASRTSR.

Belongs to the NSE1 family. In terms of assembly, component of the SMC5-SMC6 complex.

It localises to the nucleus. It is found in the chromosome. The protein resides in the telomere. It catalyses the reaction S-ubiquitinyl-[E2 ubiquitin-conjugating enzyme]-L-cysteine + [acceptor protein]-L-lysine = [E2 ubiquitin-conjugating enzyme]-L-cysteine + N(6)-ubiquitinyl-[acceptor protein]-L-lysine.. In terms of biological role, RING-type zinc finger-containing E3 ubiquitin ligase that assembles with melanoma antigen protein (MAGE) to catalyze the direct transfer of ubiquitin from E2 ubiquitin-conjugating enzyme to a specific substrate. Within MAGE-RING ubiquitin ligase complex, MAGE stimulates and specifies ubiquitin ligase activity likely through recruitment and/or stabilization of the E2 ubiquitin-conjugating enzyme at the E3:substrate complex. Involved in maintenance of genome integrity, DNA damage response and DNA repair. This chain is Non-structural maintenance of chromosomes element 1 homolog (nsmce1), found in Xenopus laevis (African clawed frog).